The primary structure comprises 118 residues: Cycloviolacin-O11 (118 aa).

An N-terminal signal peptide occupies residues 1 to 22 (MEMKNMVVGLFLIAAFALPALA). The propeptide occupies 23–84 (TSFEKDFITH…THSNSINALG (62 aa)). Residues 85–115 (GTLPCGESCVWIPCISAVVGCSCKSKVCYKN) constitute a cross-link (cyclopeptide (Gly-Asn)). 3 disulfides stabilise this stretch: Cys89/Cys105, Cys93/Cys107, and Cys98/Cys112. Positions 116–118 (SLA) are excised as a propeptide.

Cycloviolacin-O11 is a cyclic peptide. Expressed in leaves, petals and petioles but not in roots and runners (at protein level).

Probably participates in a plant defense mechanism. The protein is Cycloviolacin-O11 (Voc2) of Viola odorata (Sweet violet).